A 329-amino-acid chain; its full sequence is GTPase Obg (329 aa).

Positions 1-159 (MQFIDQARIT…WFLQLELKLL (159 aa)) constitute an Obg domain. Residues 160-328 (AEVGIIGLPN…LLAQVWKELG (169 aa)) form the OBG-type G domain. ATP-binding positions include 166–173 (GLPNAGKS), 191–195 (FTTLV), 213–216 (DIPG), 280–283 (NKQE), and 309–311 (SAA). The Mg(2+) site is built by Ser173 and Thr193.

It belongs to the TRAFAC class OBG-HflX-like GTPase superfamily. OBG GTPase family. Monomer. The cofactor is Mg(2+).

Its subcellular location is the cytoplasm. An essential GTPase which binds GTP, GDP and possibly (p)ppGpp with moderate affinity, with high nucleotide exchange rates and a fairly low GTP hydrolysis rate. Plays a role in control of the cell cycle, stress response, ribosome biogenesis and in those bacteria that undergo differentiation, in morphogenesis control. This chain is GTPase Obg, found in Prochlorococcus marinus (strain MIT 9313).